Consider the following 335-residue polypeptide: 3-hydroxy-3-methylglutaryl-CoA lyase, cytoplasmic (335 aa).

Gly-2 carries the N-myristoyl glycine lipid modification. Residues 43–310 (VKIVEVGPRD…ETGVDLLKVM (268 aa)) enclose the Pyruvate carboxyltransferase domain. Substrate is bound at residue Arg-51. Asp-52 provides a ligand contact to a divalent metal cation. At Lys-58 the chain carries N6-acetyllysine. Residues His-243 and His-245 each coordinate a divalent metal cation. Residue Cys-276 is part of the active site. Asn-285 serves as a coordination point for a divalent metal cation.

It belongs to the HMG-CoA lyase family. The cofactor is a divalent metal cation.

It is found in the cytoplasm. The protein localises to the cytosol. Its subcellular location is the endoplasmic reticulum membrane. It carries out the reaction (3S)-3-hydroxy-3-methylglutaryl-CoA = acetoacetate + acetyl-CoA. It participates in metabolic intermediate metabolism; (S)-3-hydroxy-3-methylglutaryl-CoA degradation; acetoacetate from (S)-3-hydroxy-3-methylglutaryl-CoA: step 1/1. Its function is as follows. Non-mitochondrial 3-hydroxy-3-methylglutaryl-CoA lyase that catalyzes a cation-dependent cleavage of (S)-3-hydroxy-3-methylglutaryl-CoA into acetyl-CoA and acetoacetate, a key step in ketogenesis, the products of which support energy production in nonhepatic animal tissues. The sequence is that of 3-hydroxy-3-methylglutaryl-CoA lyase, cytoplasmic (hmgcll1) from Danio rerio (Zebrafish).